The chain runs to 154 residues: Transcriptional repressor NrdR (154 aa).

A zinc finger spans residues 3 to 34; that stretch reads CPFCRHPDSRVIDSRETDEGQAIRRRRSCPEC. The ATP-cone domain maps to 46-136; that stretch reads LAVVKRSGVT…VYRSFSSADD (91 aa).

This sequence belongs to the NrdR family. It depends on Zn(2+) as a cofactor.

Functionally, negatively regulates transcription of bacterial ribonucleotide reductase nrd genes and operons by binding to NrdR-boxes. The chain is Transcriptional repressor NrdR from Mycobacterium bovis (strain ATCC BAA-935 / AF2122/97).